The chain runs to 318 residues: Ubiquinol oxidase (318 aa).

A helical transmembrane segment spans residues 150-170 (VVVLETVAAIPGMVGGMFRHL). Residues E154, E193, and H196 each contribute to the Fe cation site. The chain crosses the membrane as a helical span at residues 212-232 (MLIKLGQFLFFNGYMVFYFVA). E244, E295, and H298 together coordinate Fe cation.

The protein belongs to the alternative oxidase family. Found as monomers and homodimers. The cofactor is Fe cation.

It localises to the mitosome membrane. It catalyses the reaction 2 a ubiquinol + O2 = 2 a ubiquinone + 2 H2O. In terms of biological role, alternative oxidase which function may be to reoxidize reducing equivalents produced by glycolysis such as ubiquinol. This Trachipleistophora hominis (Microsporidian parasite) protein is Ubiquinol oxidase (AOX).